The primary structure comprises 1437 residues: Protein SUPPRESSOR OF npr1-1, CONSTITUTIVE 1 (1437 aa).

Met1 is modified (N-acetylmethionine). Positions 19 to 182 (RRYDVFPSFR…ELAEDVLRKT (164 aa)) constitute a TIR domain. 28–33 (RGEDVR) is an NAD(+) binding site. Glu93 is a catalytic residue. LRR repeat units lie at residues 554–576 (MRNLQYLEIGYYGDLPQSLVYLP), 577–598 (LKLRLLDWDDCPLKSLPSTFKA), 600–621 (YLVNLIMKYSKLEKLWEGTLPL), 622–645 (GSLKEMNLRYSNNLKEIPDLSLAI), 647–668 (LEELDLVGCKSLVTLPSSIQNA), 670–691 (KLIYLDMSDCKKLESFPTDLNL), 692–715 (ESLEYLNLTGCPNLRNFPAIKMGC), 781–805 (LGSLEGMDLSESENLTEIPDLSKAT), 807–828 (LESLILNNCKSLVTLPSTIGNL), 829–851 (HRLVRLEMKECTGLEVLPTDVNL), 852–875 (SSLETLDLSGCSSLRSFPLISTNI), 877–895 (WLYLENTAIEEIPSTIGNL), 897–918 (RLVRLEMKKCTGLEVLPTDVNL), 919–939 (SSLETLDLSGCSSLRSFPLIS), 940–962 (ESIKWLYLENTAIEEIPDLSKAT), 964–985 (LKNLKLNNCKSLVTLPTTIGNL), 1009–1029 (SSLMILDLSGCSSLRTFPLIS), 1030–1052 (TNIVWLYLENTAIEEIPSTIGNL), 1054–1075 (RLVKLEMKECTGLEVLPTDVNL), 1076–1096 (SSLMILDLSGCSSLRTFPLIS), 1097–1121 (TRIECLYLQNTAIEEVPCCIEDFTR), 1123–1143 (TVLMMYCCQRLKTISPNIFRL), and 1161–1185 (LSDATVVATMEDHVSCVPLSENIEY).

This sequence belongs to the disease resistance TIR-NB-LRR family. As to quaternary structure, homodimer. Interacts (via TIR domain) with TPR1. Interacts with EDS1. Interacts with SRFR1. Interacts with HSP90-3. Binds to MORC1/CRT1. Interacts with TRAF1B. Met-1 is specifically acetylated by N-terminal acetyltransferase complex A (NatA). The NatA-mediated acetylation serves as a degradation signal. In terms of processing, met-1 is specifically acetylated by N-terminal acetyltransferase complex B (NatB). The NatB-mediated acetylation stabilizes SNC1. Expressed in guard cells and epidermal cells, but not detected in mesophyll cells.

Its subcellular location is the cytoplasm. The protein localises to the microsome. The protein resides in the nucleus. It carries out the reaction NAD(+) + H2O = ADP-D-ribose + nicotinamide + H(+). Functionally, disease resistance protein of the TIR-NB-LRR-type. Part of the RPP5 locus that contains a cluster of several paralogous disease resistance (R) genes. Resistance proteins guard the plant against pathogens that contain an appropriate avirulence protein via an indirect interaction with this avirulence protein. That triggers a defense system including the hypersensitive response, which restricts the pathogen growth. Probably acts as a NAD(+) hydrolase (NADase): in response to activation, catalyzes cleavage of NAD(+) into ADP-D-ribose (ADPR) and nicotinamide; NAD(+) cleavage triggering a defense system that promotes cell death. Expression regulated by MOS1 at chromatin level. Nuclear localization of SNC1 is essential for its activity. ABA deficiency can rescue high-temperature inhibition of SNC1-mediated defense responses. This is Protein SUPPRESSOR OF npr1-1, CONSTITUTIVE 1 from Arabidopsis thaliana (Mouse-ear cress).